Consider the following 321-residue polypeptide: UDP-N-acetyl-alpha-D-glucosaminuronate decarboxylase (321 aa).

Positions 12, 13, 14, 33, 34, 36, 38, 76, 95, 117, 148, and 152 each coordinate NAD(+). Residue Y148 is the Proton acceptor of the active site.

It belongs to the NAD(P)-dependent epimerase/dehydratase family. In terms of assembly, homodimer. NAD(+) serves as cofactor.

It catalyses the reaction UDP-2-acetamido-2-deoxy-alpha-D-glucuronate + H(+) = UDP-N-acetyl-alpha-D-xylosamine + CO2. With respect to regulation, activity is completely inhibited by NADH but not by NADPH. Its function is as follows. Decarboxylase involved in the biosynthesis of the nucleotide-sugar UDP-N-acetylxylosamine (UDP-XylNAc). Catalyzes the NAD-dependent decarboxylation of UDP-N-acetylglucosaminuronic acid (UDP-GlcNAcA) to UDP-XylNAc. Cannot use other UDP-uronates, such as UDP-glucuronic acid (UDP-GlcA) and UDP-galacturonic acid (UDP-GalA). The polypeptide is UDP-N-acetyl-alpha-D-glucosaminuronate decarboxylase (Bacillus cytotoxicus (strain DSM 22905 / CIP 110041 / 391-98 / NVH 391-98)).